The following is a 113-amino-acid chain: Cell cycle protein GpsB (113 aa).

Residues 36-68 (LDMVIKDYSTFTQEIEALQAENIRLVQELDNAP) are a coiled coil.

The protein belongs to the GpsB family. As to quaternary structure, forms polymers through the coiled coil domains. Interacts with PBP1, MreC and EzrA.

It is found in the cytoplasm. Its function is as follows. Divisome component that associates with the complex late in its assembly, after the Z-ring is formed, and is dependent on DivIC and PBP2B for its recruitment to the divisome. Together with EzrA, is a key component of the system that regulates PBP1 localization during cell cycle progression. Its main role could be the removal of PBP1 from the cell pole after pole maturation is completed. Also contributes to the recruitment of PBP1 to the division complex. Not essential for septum formation. This is Cell cycle protein GpsB from Listeria welshimeri serovar 6b (strain ATCC 35897 / DSM 20650 / CCUG 15529 / CIP 8149 / NCTC 11857 / SLCC 5334 / V8).